Reading from the N-terminus, the 79-residue chain is MVPPGNILFLLLLPVATAQMTPGSCSGCGPLSLPLLAGLVAADAVVSLLIVVVVFVCARLRSRPTQEDDKIYINMPGRG.

The first 18 residues, Met1–Ala18, serve as a signal peptide directing secretion. At Gln19–Leu35 the chain is on the extracellular side. A helical membrane pass occupies residues Leu36–Val56. Over Cys57–Gly79 the chain is Cytoplasmic. At Tyr72 the chain carries Phosphotyrosine. The segment at Tyr72–Asn74 is GRB2 binding site. The tract at residues Tyr72–Met75 is PIK3R1 binding site.

It belongs to the DAP10 family. As to quaternary structure, homodimer; Disulfide-linked. Heterohexamer composed of four subunits of HCST/DAP10 and two subunits of KLRK1. Interacts (via transmembrane domain) with KLRK1 (via transmembrane domain); the interaction is required for KLRK1 NK cell surface and induces NK cell-mediated cytotoxicity. Interacts with PIK3R1 and GRB2. Interacts with CLEC5A. Forms an CLEC5A/TYROBP/HCST trimolecular complex depending almost solely on TYROBP. Interacts with KLRK1. Interacts with CD300H. Phosphorylated; PIK3R1 and GRB2 associate specifically with tyrosine-phosphorylated HCST. Post-translationally, O-glycosylated.

It is found in the membrane. Transmembrane adapter protein which associates with KLRK1 to form an activation receptor KLRK1-HCST in lymphoid and myeloid cells; this receptor plays a major role in triggering cytotoxicity against target cells expressing cell surface ligands such as MHC class I chain-related MICA and MICB, and UL16-binding proteins (ULBPs); these ligands are up-regulated by stress conditions and pathological state such as viral infection and tumor transformation. Functions as a docking site for PI3-kinase PIK3R1 and GRB2. Interaction of ULBPs with KLRK1-HCST triggers calcium mobilization and activation of the PIK3R1, MAP2K/ERK, and JAK2/STAT5 signaling pathways. Both PIK3R1 and GRB2 are required for full KLRK1-HCST-mediated activation and ultimate killing of target cells. In NK cells, KLRK1-HCST signaling directly induces cytotoxicity and enhances cytokine production initiated via DAP12/TYROBP-associated receptors. In T-cells, it provides primarily costimulation for TCR-induced signals. KLRK1-HCST receptor plays a role in immune surveillance against tumors and is required for cytolysis of tumors cells; indeed, melanoma cells that do not express KLRK1 ligands escape from immune surveillance mediated by NK cells. This Bos taurus (Bovine) protein is Hematopoietic cell signal transducer (HCST).